Consider the following 681-residue polypeptide: Sodium/glucose cotransporter 4 (681 aa).

Residues 1–36 (MSKELAAMGPGASGDGVRTETAPHIALDSRVGLHAY) lie on the Extracellular side of the membrane. Residues 37 to 57 (DISVVVIYFVFVIAVGIWSSI) traverse the membrane as a helical segment. At 58–75 (RASRGTIGGYFLAGRSMS) the chain is on the cytoplasmic side. Residues 76-98 (WWPIGASLMSSNVGSGLFIGLAG) form a helical membrane-spanning segment. The Extracellular segment spans residues 99–114 (TGAAGGLAVGGFEWNA). A helical transmembrane segment spans residues 115–135 (TWLLLALGWVFVPVYIAAGVV). Residues 136–157 (TMPQYLKKRFGGQRIQVYMSVL) are Cytoplasmic-facing. The chain crosses the membrane as a helical span at residues 158-178 (SLILYIFTKISTDIFSGALFI). The Extracellular portion of the chain corresponds to 179–190 (QMALGWNLYLST). A helical membrane pass occupies residues 191–211 (GILLVVTAVYTIAGGLMAVIY). Residues 212–217 (TDALQT) are Cytoplasmic-facing. A helical membrane pass occupies residues 218–238 (VIMVGGALVLMFLGFQDVGWY). Residues 239 to 275 (PGLEQRYRQAIPNVTVPNTTCHLPRPDAFHILRDPVS) lie on the Extracellular side of the membrane. N251 carries N-linked (GlcNAc...) asparagine glycosylation. The chain crosses the membrane as a helical span at residues 276–296 (GDIPWPGLIFGLTVLATWCWC). At 297–317 (TDQVIVQRSLSAKSLSHAKGG) the chain is on the cytoplasmic side. Residues 318 to 338 (SVLGGYLKILPMFFIVMPGMI) traverse the membrane as a helical segment. At 339 to 383 (SRALFPDEVGCVDPDVCQRICGARVGCSNIAYPKLVMALMPVGLR) the chain is on the extracellular side. The chain crosses the membrane as a helical span at residues 384-406 (GLMIAVIMAALMSSLTSIFNSSS). Topologically, residues 407 to 427 (TLFTIDVWQRFRRKSTEQELM) are cytoplasmic. A helical transmembrane segment spans residues 428–448 (VVGRVFVVFLVVISILWIPII). The Extracellular portion of the chain corresponds to 449–459 (QSSNSGQLFDY). The chain crosses the membrane as a helical span at residues 460–480 (IQAVTSYLAPPITALFLLAIF). Topologically, residues 481–487 (CKRVTEP) are cytoplasmic. The helical transmembrane segment at 488-508 (GAFWGLVFGLGVGLLRMILEF) threads the bilayer. At 509-530 (SYPAPACGEVDRRPAVLKDFHY) the chain is on the extracellular side. The helical transmembrane segment at 531-551 (LYFAILLCGLTAIVIVIVSLC) threads the bilayer. Residues 552 to 660 (TTPIPEEQLT…SIEEEPLWRH (109 aa)) lie on the Cytoplasmic side of the membrane. The segment covering 579–591 (AHESTPEISERPA) has biased composition (basic and acidic residues). The interval 579-614 (AHESTPEISERPAGECPAGGGAAENSSLGQEQPEAP) is disordered. Phosphoserine is present on residues S604 and S605. A helical membrane pass occupies residues 661–681 (VCNINAVLLLAINIFLWGYFA).

The protein belongs to the sodium:solute symporter (SSF) (TC 2.A.21) family. Expressed in the small intestine, kidney and liver.

The protein localises to the cell membrane. The enzyme catalyses D-mannose(out) + n Na(+)(out) = D-mannose(in) + n Na(+)(in). In terms of biological role, electrogenic Na(+)-coupled sugar symporter that may play a primary role in D-mannose and possibly D-fructose and D-glucose transport at the plasma membrane. Transporter activity is driven by a transmembrane Na(+) electrochemical gradient set by the Na(+)/K(+) pump. Exclusively recognizes sugar substrates having a pyranose ring with an axial hydroxyl group on carbon 2. The protein is Sodium/glucose cotransporter 4 of Homo sapiens (Human).